The chain runs to 501 residues: ATP-dependent rRNA helicase RRP3 (501 aa).

Residues 3–44 (KIVKRKEKKANDELTSLAEKIRAKALENQKKLIEAEKEGGSE) are a coiled coil. Residues 36-79 (EAEKEGGSESDSEEDATAEKKKVLKSKSKSTVSTQNENTNEDES) form a disordered region. Phosphoserine occurs at positions 43, 45, and 47. Positions 81 to 109 (ESFSELNLVPELIQACKNLNYSKPTPIQS) match the Q motif motif. Positions 112–284 (IPPALEGHDI…RASLTNPVKC (173 aa)) constitute a Helicase ATP-binding domain. An ATP-binding site is contributed by 125–132 (AQTGSGKT). Positions 231 to 234 (DEAD) match the DEAD box motif. The Helicase C-terminal domain occupies 307–461 (LKNTYLIYLL…NIILTLRDSV (155 aa)). A disordered region spans residues 480–501 (IARGKGRRGRMMTRENMDMGER). The span at 491 to 501 (MTRENMDMGER) shows a compositional bias: basic and acidic residues.

The protein belongs to the DEAD box helicase family. DDX47/RRP3 subfamily. Interacts with the SSU processome.

The protein resides in the nucleus. It catalyses the reaction ATP + H2O = ADP + phosphate + H(+). Its activity is regulated as follows. ATPase activity is stimulated upon the addition of RNA. Functionally, ATP-dependent rRNA helicase required for pre-ribosomal RNA processing. Involved in the maturation of the 35S-pre-rRNA and to its cleavage to mature 18S rRNA. The protein is ATP-dependent rRNA helicase RRP3 of Saccharomyces cerevisiae (strain ATCC 204508 / S288c) (Baker's yeast).